The chain runs to 357 residues: Histidine biosynthesis bifunctional protein HisB (357 aa).

Positions 1-168 are histidinol-phosphatase; the sequence is MSEKVLFIDR…IVFKLTKKHD (168 aa). Aspartate 9 acts as the Nucleophile in catalysis. Residues aspartate 9 and aspartate 11 each contribute to the Mg(2+) site. The active-site Proton donor is aspartate 11. Zn(2+) is bound by residues cysteine 93, histidine 95, cysteine 101, and cysteine 103. Residue aspartate 130 coordinates Mg(2+). Residues 169–357 form an imidazoleglycerol-phosphate dehydratase region; it reads RHAKVVRNTK…KNLPSSKGLL (189 aa).

The protein in the N-terminal section; belongs to the histidinol-phosphatase family. It in the C-terminal section; belongs to the imidazoleglycerol-phosphate dehydratase family. It depends on Mg(2+) as a cofactor. The cofactor is Zn(2+).

The protein resides in the cytoplasm. The catalysed reaction is D-erythro-1-(imidazol-4-yl)glycerol 3-phosphate = 3-(imidazol-4-yl)-2-oxopropyl phosphate + H2O. It catalyses the reaction L-histidinol phosphate + H2O = L-histidinol + phosphate. It functions in the pathway amino-acid biosynthesis; L-histidine biosynthesis; L-histidine from 5-phospho-alpha-D-ribose 1-diphosphate: step 6/9. It participates in amino-acid biosynthesis; L-histidine biosynthesis; L-histidine from 5-phospho-alpha-D-ribose 1-diphosphate: step 8/9. This chain is Histidine biosynthesis bifunctional protein HisB, found in Buchnera aphidicola subsp. Baizongia pistaciae (strain Bp).